The primary structure comprises 308 residues: 11-beta-hydroxysteroid dehydrogenase-like 2 (308 aa).

Residues 10–30 traverse the membrane as a helical; Signal-anchor for type II membrane protein segment; sequence FLLPPLTISFLVLFYPFYLFT. Residues 53–79 and Asp104 contribute to the NADP(+) site; that span reads GASSGIGEHVAYEYAKKGAKLALVARR. A substrate-binding site is contributed by Ser183. Tyr196 functions as the Proton acceptor in the catalytic mechanism. Residues 196–200 and Lys200 contribute to the NADP(+) site; that span reads YSASK.

It belongs to the short-chain dehydrogenases/reductases (SDR) family.

It is found in the membrane. This is 11-beta-hydroxysteroid dehydrogenase-like 2 (HSD2) from Arabidopsis thaliana (Mouse-ear cress).